The primary structure comprises 667 residues: mRNA cap guanine-N(7) methyltransferase (667 aa).

A compositionally biased stretch (basic and acidic residues) spans 1–19; that stretch reads MYDPARDSWEERDGDEARS. The disordered stretch occupies residues 1–272; the sequence is MYDPARDSWE…RRRQEERERA (272 aa). The span at 33–52 shows a compositional bias: polar residues; sequence FSSSEQIYGASGENNNTTDL. Low complexity predominate over residues 72 to 87; that stretch reads SPPAQSTTQTPPSIST. Over residues 88–128 the composition is skewed to polar residues; it reads HVQSPVNPAAQEASNTQSLTSAAQNQSNKSTTTMDNTSGSA. Positions 132–142 are enriched in basic and acidic residues; it reads PRADPSDKSNR. Over residues 147–156 the composition is skewed to polar residues; sequence ASPTDQNGSQ. Positions 256-272 are enriched in basic and acidic residues; the sequence is LVDRETLRRRQEERERA. The mRNA cap 0 methyltransferase domain occupies 309-667; it reads SKIKGLRSFN…FYHAFCFYKV (359 aa). 318-319 lines the mRNA pocket; it reads NN. S-adenosyl-L-methionine-binding positions include Lys-322, Gly-365, Asp-389, Asp-427, 470–472, and Tyr-475; that span reads MFT. Over residues 521 to 535 the composition is skewed to basic and acidic residues; it reads KKERQSQAKKEKTDE. Positions 521-547 are disordered; the sequence is KKERQSQAKKEKTDEAPEDGEVEEDDG. Acidic residues predominate over residues 536–547; it reads APEDGEVEEDDG.

Belongs to the class I-like SAM-binding methyltransferase superfamily. mRNA cap 0 methyltransferase family.

It localises to the nucleus. The catalysed reaction is a 5'-end (5'-triphosphoguanosine)-ribonucleoside in mRNA + S-adenosyl-L-methionine = a 5'-end (N(7)-methyl 5'-triphosphoguanosine)-ribonucleoside in mRNA + S-adenosyl-L-homocysteine. Responsible for methylating the 5'-cap structure of mRNAs. The sequence is that of mRNA cap guanine-N(7) methyltransferase (abd1) from Neosartorya fischeri (strain ATCC 1020 / DSM 3700 / CBS 544.65 / FGSC A1164 / JCM 1740 / NRRL 181 / WB 181) (Aspergillus fischerianus).